A 732-amino-acid chain; its full sequence is Polyribonucleotide nucleotidyltransferase (732 aa).

Positions 516 and 522 each coordinate Mg(2+). Residues 582 to 642 form the KH domain; it reads PSSHTITVHP…PKVIAACDYI (61 aa). The S1 motif domain occupies 659–726; that stretch reads GDILKGKIKR…KGHKIELGLR (68 aa).

This sequence belongs to the polyribonucleotide nucleotidyltransferase family. Mg(2+) serves as cofactor.

It is found in the cytoplasm. The enzyme catalyses RNA(n+1) + phosphate = RNA(n) + a ribonucleoside 5'-diphosphate. Involved in mRNA degradation. Catalyzes the phosphorolysis of single-stranded polyribonucleotides processively in the 3'- to 5'-direction. The sequence is that of Polyribonucleotide nucleotidyltransferase from Nitratiruptor sp. (strain SB155-2).